Reading from the N-terminus, the 230-residue chain is Uracil-DNA glycosylase (230 aa).

Residue Asp70 is the Proton acceptor of the active site.

Belongs to the uracil-DNA glycosylase (UDG) superfamily. UNG family.

The protein localises to the cytoplasm. It catalyses the reaction Hydrolyzes single-stranded DNA or mismatched double-stranded DNA and polynucleotides, releasing free uracil.. Its function is as follows. Excises uracil residues from the DNA which can arise as a result of misincorporation of dUMP residues by DNA polymerase or due to deamination of cytosine. The polypeptide is Uracil-DNA glycosylase (Campylobacter concisus (strain 13826)).